We begin with the raw amino-acid sequence, 579 residues long: Tricyclene synthase 0e23, chloroplastic (579 aa).

The transit peptide at 1-66 (MAFCISYLGA…ALCLNAHSTS (66 aa)) directs the protein to the chloroplast. Residues Asn-27, Asn-204, and Asn-317 are each glycosylated (N-linked (GlcNAc...) asparagine). Mg(2+)-binding residues include Asp-336 and Asp-340. Residues 336–340 (DDIFD) carry the DDXXD motif motif. Asn-382 and Asn-463 each carry an N-linked (GlcNAc...) asparagine glycan. Residues Asn-480 and Glu-488 each coordinate Mg(2+). Asn-507 carries N-linked (GlcNAc...) asparagine glycosylation.

Belongs to the terpene synthase family. Tpsg subfamily. Mg(2+) is required as a cofactor. Mn(2+) serves as cofactor. Accumulates in flowers; mostly expressed in both upper and lower petal lobes, and, to a lower extent, in tube and stamens.

The protein localises to the plastid. The protein resides in the chloroplast stroma. It carries out the reaction (2E)-geranyl diphosphate = tricyclene + diphosphate. The enzyme catalyses (2E)-geranyl diphosphate = (E)-beta-ocimene + diphosphate. The protein operates within secondary metabolite biosynthesis; terpenoid biosynthesis. Contributes to floral scent emission. This chain is Tricyclene synthase 0e23, chloroplastic (0e23), found in Antirrhinum majus (Garden snapdragon).